The chain runs to 396 residues: Enoyl-[acyl-carrier-protein] reductase [NADH] (396 aa).

NAD(+) contacts are provided by residues 47–52, 73–74, 110–111, and 138–139; these read GASTGF, FE, DA, and LA. Position 224 (Tyr224) interacts with substrate. Catalysis depends on Tyr234, which acts as the Proton donor. Residues Lys243 and 272 to 274 contribute to the NAD(+) site; that span reads LVT.

Belongs to the TER reductase family. As to quaternary structure, monomer.

The catalysed reaction is a 2,3-saturated acyl-[ACP] + NAD(+) = a (2E)-enoyl-[ACP] + NADH + H(+). It participates in lipid metabolism; fatty acid biosynthesis. In terms of biological role, involved in the final reduction of the elongation cycle of fatty acid synthesis (FAS II). Catalyzes the reduction of a carbon-carbon double bond in an enoyl moiety that is covalently linked to an acyl carrier protein (ACP). The sequence is that of Enoyl-[acyl-carrier-protein] reductase [NADH] from Cytophaga hutchinsonii (strain ATCC 33406 / DSM 1761 / CIP 103989 / NBRC 15051 / NCIMB 9469 / D465).